The following is a 118-amino-acid chain: Myotrophin (118 aa).

3 ANK repeats span residues 1 to 30, 34 to 65, and 67 to 98; these read MGDK…DVNR, GGRK…NAAD, and HGIT…TVKG.

The protein belongs to the myotrophin family.

The protein localises to the cytoplasm. Its subcellular location is the nucleus. It localises to the perinuclear region. Functionally, regulates NF-kappa-B transcription factor activity. Promotes growth of cardiomyocytes, but not cardiomyocyte proliferation. Promotes cardiac muscle hypertrophy. Plays a role in the regulation of the growth of actin filaments. Inhibits the activity of the F-actin-capping protein complex. This chain is Myotrophin (mtpn), found in Xenopus tropicalis (Western clawed frog).